The primary structure comprises 1407 residues: YEATS domain-containing protein 2 (1407 aa).

Lys-9 participates in a covalent cross-link: Glycyl lysine isopeptide (Lys-Gly) (interchain with G-Cter in SUMO2). Residues 54–80 (MKNKEHEIDVIDQRLIEARRMMDKLRA) are a coiled coil. Residue Lys-113 forms a Glycyl lysine isopeptide (Lys-Gly) (interchain with G-Cter in SUMO2) linkage. Positions 116–196 (LESPSRSSSP…SHKRELRNAD (81 aa)) are disordered. 3 positions are modified to phosphoserine: Ser-118, Ser-120, and Ser-157. Positions 119-148 (PSRSSSPTNQRSETPSANHSESDSLSQHND) are enriched in polar residues. The span at 149–165 (FLSDKDNNSNVDVEERP) shows a compositional bias: basic and acidic residues. Lys-189 is covalently cross-linked (Glycyl lysine isopeptide (Lys-Gly) (interchain with G-Cter in SUMO2)). The region spanning 201–346 (ETSRLFVKKT…EDSVYPQSSE (146 aa)) is the YEATS domain. 2 histone H3K27cr binding regions span residues 260–262 (HPS) and 283–285 (WGE). Residue Thr-406 is modified to Phosphothreonine. Phosphoserine is present on residues Ser-446, Ser-462, Ser-464, Ser-470, and Ser-472. Positions 462-540 (SGSPISTPSP…GTGSPIPKIH (79 aa)) are disordered. Phosphothreonine is present on Thr-477. Residue Lys-486 forms a Glycyl lysine isopeptide (Lys-Gly) (interchain with G-Cter in SUMO2) linkage. The segment covering 511 to 520 (STPSTGSPTS) has biased composition (low complexity). Ser-534 bears the Phosphoserine mark. A Glycyl lysine isopeptide (Lys-Gly) (interchain with G-Cter in SUMO2) cross-link involves residue Lys-550. The residue at position 573 (Ser-573) is a Phosphoserine. Residue Lys-590 forms a Glycyl lysine isopeptide (Lys-Gly) (interchain with G-Cter in SUMO2) linkage. The residue at position 625 (Ser-625) is a Phosphoserine. Glycyl lysine isopeptide (Lys-Gly) (interchain with G-Cter in SUMO2) cross-links involve residues Lys-647 and Lys-771. The disordered stretch occupies residues 791 to 833 (SGSAAAGGSGSSGAGGGSGGGGGSGAGGTPSTSGPGGGPQHLT). Positions 795 to 829 (AAGGSGSSGAGGGSGGGGGSGAGGTPSTSGPGGGP) are enriched in gly residues. A Glycyl lysine isopeptide (Lys-Gly) (interchain with G-Cter in SUMO2) cross-link involves residue Lys-908. Lys-1095 participates in a covalent cross-link: Glycyl lysine isopeptide (Lys-Gly) (interchain with G-Cter in SUMO1); alternate. Lys-1095 participates in a covalent cross-link: Glycyl lysine isopeptide (Lys-Gly) (interchain with G-Cter in SUMO2); alternate. Residue Lys-1115 forms a Glycyl lysine isopeptide (Lys-Gly) (interchain with G-Cter in SUMO2) linkage. Position 1204 is a phosphothreonine (Thr-1204). Glycyl lysine isopeptide (Lys-Gly) (interchain with G-Cter in SUMO2) cross-links involve residues Lys-1207 and Lys-1270.

As to quaternary structure, component of the ADA2A-containing complex (ATAC), composed of KAT14, KAT2A, TADA2L, TADA3L, ZZ3, MBIP, WDR5, YEATS2, SGF29 and DR1.

It is found in the nucleus. Its function is as follows. Chromatin reader component of the ATAC complex, a complex with histone acetyltransferase activity on histones H3 and H4. YEATS2 specifically recognizes and binds histone H3 crotonylated at 'Lys-27' (H3K27cr). Crotonylation marks active promoters and enhancers and confers resistance to transcriptional repressors. The sequence is that of YEATS domain-containing protein 2 from Mus musculus (Mouse).